The following is a 653-amino-acid chain: NADH-ubiquinone oxidoreductase chain 5 (653 aa).

16 helical membrane passes run 1–21 (MYLV…FFGR), 30–50 (LITS…FFEV), 81–103 (LTVS…SIGY), 120–140 (FTFM…FLGV), 177–197 (FLTI…YSTV), 200–220 (LAPY…LIGA), 241–261 (TPVS…YLLM), 274–294 (LILC…IGLF), 301–319 (VIAY…AIGL), 331–351 (NHAF…HSVS), 365–385 (FLPL…AIPF), 403–423 (FYIS…FTTL), 452–472 (IFIN…GYLT), 511–531 (LLPL…SEFF), 610–630 (GVIT…VFLL), and 631–651 (YLNI…STIN).

Belongs to the complex I subunit 5 family.

The protein localises to the mitochondrion inner membrane. The enzyme catalyses a ubiquinone + NADH + 5 H(+)(in) = a ubiquinol + NAD(+) + 4 H(+)(out). Functionally, core subunit of the mitochondrial membrane respiratory chain NADH dehydrogenase (Complex I) that is believed to belong to the minimal assembly required for catalysis. Complex I functions in the transfer of electrons from NADH to the respiratory chain. The immediate electron acceptor for the enzyme is believed to be ubiquinone. The sequence is that of NADH-ubiquinone oxidoreductase chain 5 (ND5) from Trichophyton rubrum (Athlete's foot fungus).